The primary structure comprises 334 residues: Non-functional pseudokinase ZED1 (334 aa).

A Protein kinase domain is found at 49–334 (FSESRIISSW…KELKLIEKLS (286 aa)). Residues 55–63 (ISSWGYFIW) and Lys-76 each bind ATP. O-acetylthreonine occurs at positions 125 and 177.

Belongs to the protein kinase superfamily. Ser/Thr protein kinase family. ZRK subfamily. Interacts with RPP13L4/ZAR1. Component of an immune signaling complex made of, at least, SZE1, BKN2/SZE2, ZAR1 and ZED1. Binds directly to SZE1 at the plasma membrane. As to expression, expressed in seedlings, young leaves, floral organs, shoot apical meristems (SAM) and inflorescence stems.

It is found in the cytoplasm. It localises to the cytosol. Its subcellular location is the nucleus. The protein resides in the cell membrane. Functionally, together with RPP13L4/ZAR1, involved in the ambient temperature (above 22 degrees Celsius)-sensitive aerial organ development. Together with RPP13L4/ZAR1, involved in the regulation of the ambient temperature-sensitive intersection of growth and immune response in the absence of pathogens, by repressing the transcription of SNC1. Probable non-functional kinase required for recognition of the Pseudomonas syringae type III effector HopZ1a by RPP13L4/ZAR1 and, together with SZE1 and SZE2, to trigger subsequent defense responses. May function as a decoy to trap HopZ1a in the ZAR1 complex for recognition by the plant immune system. This chain is Non-functional pseudokinase ZED1, found in Arabidopsis thaliana (Mouse-ear cress).